A 288-amino-acid chain; its full sequence is MKGSTVHTKWQAYCRLMRIDKPIGSLLLLWPTLWALWLAGRGIPEAKILVVFVLGVFFMRAAGCVVNDYADRHIDGFVKRTASRPLPSGTISEKESKILFVVLILLSFGLVLTLNSMTIWLSLAALALAWIYPFMKRVTHLPQVVLGAAFGWSIPMGFAAVSESLPLVCWLLLLANICWTVAYDTQYAMVDRDDDLRIGVKSTAILFGQHDKLIIGLLQLATLLLMVAIGWLMNLGGAFYWSILLAGALFTHQQKMIAQREREPCFRAFLNNNYVGLILFLGILISYW.

8 helical membrane-spanning segments follow: residues 23-43, 46-66, 98-118, 141-161, 163-183, 213-233, 234-254, and 268-288; these read IGSLLLLWPTLWALWLAGRGI, AKILVVFVLGVFFMRAAGCVV, ILFVVLILLSFGLVLTLNSMT, LPQVVLGAAFGWSIPMGFAAV, ESLPLVCWLLLLANICWTVAY, LIIGLLQLATLLLMVAIGWLM, NLGGAFYWSILLAGALFTHQQ, and AFLNNNYVGLILFLGILISYW.

Belongs to the UbiA prenyltransferase family. It depends on Mg(2+) as a cofactor.

The protein resides in the cell inner membrane. The enzyme catalyses all-trans-octaprenyl diphosphate + 4-hydroxybenzoate = 4-hydroxy-3-(all-trans-octaprenyl)benzoate + diphosphate. It functions in the pathway cofactor biosynthesis; ubiquinone biosynthesis. Its function is as follows. Catalyzes the prenylation of para-hydroxybenzoate (PHB) with an all-trans polyprenyl group. Mediates the second step in the final reaction sequence of ubiquinone-8 (UQ-8) biosynthesis, which is the condensation of the polyisoprenoid side chain with PHB, generating the first membrane-bound Q intermediate 3-octaprenyl-4-hydroxybenzoate. The polypeptide is 4-hydroxybenzoate octaprenyltransferase (Yersinia pseudotuberculosis serotype O:1b (strain IP 31758)).